A 441-amino-acid chain; its full sequence is CBL-interacting serine/threonine-protein kinase 6 (441 aa).

Residues 24-278 form the Protein kinase domain; that stretch reads YELGRLLGHG…IEKVMDSPWF (255 aa). Residues 30-38 and Lys-53 contribute to the ATP site; that span reads LGHGTFAKV. Asp-146 functions as the Proton acceptor in the catalytic mechanism. The activation loop stretch occupies residues 164–193; that stretch reads DFGLSAFTEHLKQDGLLHTTCGTPAYVAPE. Ser-168 is subject to Phosphoserine. Thr-182 carries the post-translational modification Phosphothreonine. An NAF domain is found at 310–334; it reads EETETLNAFHIIALSEGFDLSPLFE. Residues 341–371 form a PPI region; it reads KREMRFATSRPASSVISSLEEAARVGNKFDV.

This sequence belongs to the protein kinase superfamily. CAMK Ser/Thr protein kinase family. SNF1 subfamily. Part of a K(+)-channel calcium-sensing kinase/phosphatase complex composed by a calcium sensor CBL (CBL1, CBL2, CBL3 or CBL9), a kinase CIPK (CIPK6, CIPK16 or CIPK23), a phosphatase PP2C (AIP1) and a K(+)-channel (AKT1). Interacts with AKT1, AKT2,CBL1, CBL2, CBL3, CBL4/SOS3 and CBL9. The cofactor is Mn(2+). Autophosphorylated. In terms of tissue distribution, expressed in roots and shoots.

Its subcellular location is the endoplasmic reticulum. It carries out the reaction L-seryl-[protein] + ATP = O-phospho-L-seryl-[protein] + ADP + H(+). The enzyme catalyses L-threonyl-[protein] + ATP = O-phospho-L-threonyl-[protein] + ADP + H(+). In terms of biological role, CIPK serine-threonine protein kinases interact with CBL proteins. Binding of a CBL protein to the regulatory NAF domain of CIPK protein lead to the activation of the kinase in a calcium-dependent manner. Downstream of CBL1, CBL2, CBL3 and CBL9, regulates by phosphorylation the K(+) conductance and uptake of AKT1. Binds to CBL4 to modulate AKT2 activity by promoting a kinase interaction-dependent but phosphorylation-independent translocation of the channel to the plasma membrane. This is CBL-interacting serine/threonine-protein kinase 6 (CIPK6) from Arabidopsis thaliana (Mouse-ear cress).